The sequence spans 804 residues: SH3-containing GRB2-like protein 3-interacting protein 1 (804 aa).

Disordered stretches follow at residues methionine 1–histidine 90, leucine 124–leucine 181, and isoleucine 199–threonine 254. Over residues arginine 16–lysine 34 the composition is skewed to basic and acidic residues. Phosphoserine occurs at positions 54, 80, 81, 83, 125, 127, 132, and 145. Threonine 156 and threonine 158 each carry phosphothreonine. Phosphoserine is present on serine 212. The segment covering threonine 221–proline 236 has biased composition (pro residues). Phosphothreonine is present on residues threonine 223 and threonine 235. Phosphoserine is present on residues serine 241, serine 263, serine 276, serine 292, and serine 295. The segment covering valine 289–valine 309 has biased composition (basic and acidic residues). Residues valine 289–glutamate 500 form a disordered region. Phosphothreonine occurs at positions 300 and 304. Residues serine 322–valine 346 show a composition bias toward pro residues. The residue at position 348 (serine 348) is a Phosphoserine. Residues glutamate 354 to tyrosine 369 show a composition bias toward basic and acidic residues. A Phosphoserine modification is found at serine 375. Threonine 386 bears the Phosphothreonine mark. Residues threonine 413–threonine 432 show a composition bias toward low complexity. Residues threonine 433–lysine 451 are compositionally biased toward pro residues. Low complexity-rich tracts occupy residues serine 458–serine 468 and proline 475–threonine 498. Residue serine 462 is modified to Phosphoserine. Positions threonine 535–aspartate 803 constitute an MHD domain. Interaction with DPF motifs-containing proteins stretches follow at residues proline 537 to threonine 543, serine 569 to proline 571, threonine 643 to asparagine 646, and serine 789 to arginine 794. Residues methionine 625–asparagine 804 are necessary and sufficient to mediate interaction with CANX.

Interacts with proteins essential or regulating the formation of functional clathrin-coated pits. Interacts with CANX. Interacts with AP2A1. Interacts with EPS15. Interacts with SH3GL3. Interacts with AMPH. Interacts with ITSN1 (via SH3 domains). Interacts with and REPS1.

It is found in the membrane. It localises to the clathrin-coated pit. Its function is as follows. May function in clathrin-mediated endocytosis. Has both a membrane binding/tubulating activity and the ability to recruit proteins essential to the formation of functional clathrin-coated pits. Has a preference for membranes enriched in phosphatidylserine and phosphoinositides and is required for the endocytosis of the transferrin receptor. May also bind tubulin. May play a role in the regulation of energy homeostasis. The protein is SH3-containing GRB2-like protein 3-interacting protein 1 (SGIP1) of Pongo abelii (Sumatran orangutan).